A 90-amino-acid polypeptide reads, in one-letter code: Probable Fe(2+)-trafficking protein (90 aa).

Belongs to the Fe(2+)-trafficking protein family.

Its function is as follows. Could be a mediator in iron transactions between iron acquisition and iron-requiring processes, such as synthesis and/or repair of Fe-S clusters in biosynthetic enzymes. The protein is Probable Fe(2+)-trafficking protein of Pseudomonas putida (strain ATCC 700007 / DSM 6899 / JCM 31910 / BCRC 17059 / LMG 24140 / F1).